We begin with the raw amino-acid sequence, 251 residues long: uncharacterized protein (251 aa).

This is an uncharacterized protein from Methanocaldococcus jannaschii (strain ATCC 43067 / DSM 2661 / JAL-1 / JCM 10045 / NBRC 100440) (Methanococcus jannaschii).